Consider the following 567-residue polypeptide: Oxygen-dependent choline dehydrogenase (567 aa).

Residue 6–35 (DYIIVGAGSAGNTLATRLTEDEGVTVLLLE) coordinates FAD. Positions 182–203 (QQEGFGPMDRTVTPKGRRASTA) are disordered. The active-site Proton acceptor is histidine 475.

It belongs to the GMC oxidoreductase family. FAD serves as cofactor.

It carries out the reaction choline + A = betaine aldehyde + AH2. It catalyses the reaction betaine aldehyde + NAD(+) + H2O = glycine betaine + NADH + 2 H(+). It functions in the pathway amine and polyamine biosynthesis; betaine biosynthesis via choline pathway; betaine aldehyde from choline (cytochrome c reductase route): step 1/1. Involved in the biosynthesis of the osmoprotectant glycine betaine. Catalyzes the oxidation of choline to betaine aldehyde and betaine aldehyde to glycine betaine at the same rate. In Pseudomonas fluorescens (strain ATCC BAA-477 / NRRL B-23932 / Pf-5), this protein is Oxygen-dependent choline dehydrogenase.